Reading from the N-terminus, the 515-residue chain is Maturase K (515 aa).

This sequence belongs to the intron maturase 2 family. MatK subfamily.

The protein localises to the plastid. It localises to the chloroplast. Its function is as follows. Usually encoded in the trnK tRNA gene intron. Probably assists in splicing its own and other chloroplast group II introns. In Picea engelmannii (Engelmann's spruce), this protein is Maturase K.